The primary structure comprises 341 residues: Acetylpolyamine amidohydrolase (341 aa).

Substrate contacts are provided by Y19, E106, and E117. The Proton donor/acceptor role is filled by H159. Zn(2+) is bound by residues D195, H197, and D284. Y323 is a substrate binding site.

It belongs to the histone deacetylase family. As to quaternary structure, homodimer. Requires Zn(2+) as cofactor.

It carries out the reaction N-acetylputrescine + H2O = putrescine + acetate. It catalyses the reaction N-acetylcadaverine + H2O = cadaverine + acetate. The enzyme catalyses N(1)-acetylspermine + H2O = spermine + acetate. The catalysed reaction is N(1)-acetylspermidine + H2O = spermidine + acetate. It carries out the reaction N(8)-acetylspermidine + H2O = spermidine + acetate. The protein operates within amine and polyamine metabolism. With respect to regulation, zinc ions inhibit enzyme activity in a dose-dependent manner. Inhibited by KCl at concentrations above 10 mM. Inhibited by o-oxyquinoline in vitro, suggesting that it is a metalloprotein. Inhibited by various substrate N(8)-acetylspermidine analogs bearing different metal-binding groups such as trifluoromethylketone, thiol, or hydroxamate, and by hydroxamate analogs of short-chain acetyldiamines. Functionally, involved in polyamine metabolism. Catalyzes the deacetylation of various acetylated polyamines such as N-acetylputrescine, N-acetylcadaverine, N(1)-acetylspermine, N(1)-acetylspermidine and N(8)-acetylspermidine. In vitro, is also able to deacetylate L-Lys(epsilon-acetyl)coumarin, but has very low activity towards the larger tetrapeptide N-acetyl-L-Arg-L-His-L-Lys(epsilon-acetyl)-L-Lys(epsilon-acetyl)coumarin. The polypeptide is Acetylpolyamine amidohydrolase (Mycoplana ramosa (Mycoplana bullata)).